The primary structure comprises 598 residues: MSIFTQEVSAINGQSGNIKQMLTLEMLPELKSLLSDSVEQQICIDGILTLWIDKTQLIPALRLLKTLPQPFDLLLDLFGVDERLRLDKDKLPAQDFTLVYQLCSINRNQDIRLKVALANDQAEIPSITAFWPSANWYEREAWDMFGIIFSDHPNLYRLLLPPTFKGHPLRKEFPCRATETEAFSLDDERLAIEQEALKFDPKRWGMEQSNKDNDYLFLNLGPNHPSVHGVFRIALQLDGEHIINSVPDIGYHHRGAEKIAERQTWHGFIPYTDRIDYLGGVMNNFPYILAIEQLANIQVSERVKCIRVMLAECFRILSHMLFFGTFAQDVGQLSPIFYLFIDREKLFGIIEAITGARMHPSWFRIGGLAQDLPKGWDTMMQEFVDEFPKKLDEYEVMVMQNSILKRRSIGIGQYNTQEALDWNITGAGLRATGLEWDLRKARPYSGYENYDFEVPTGHKGDAYDRCQLRVEEMRQSVKIIQQCINNMPEGEVKADHPLTTPPSQRSKHDIETLIQHFLNVSWGPVMPKGESCFAVEATKGVNAYTIISDGSNTSYRTRIRTPSFAHLQMIPKMAKGLMVADLIVILASIDFVMADVDR.

The segment at 1-190 is NADH dehydrogenase I subunit C; that stretch reads MSIFTQEVSA…EAFSLDDERL (190 aa). The NADH dehydrogenase I subunit D stretch occupies residues 214–598; that stretch reads DYLFLNLGPN…IDFVMADVDR (385 aa).

In the N-terminal section; belongs to the complex I 30 kDa subunit family. The protein in the C-terminal section; belongs to the complex I 49 kDa subunit family. As to quaternary structure, NDH-1 is composed of 13 different subunits. Subunits NuoB, CD, E, F, and G constitute the peripheral sector of the complex.

It is found in the cell inner membrane. The catalysed reaction is a quinone + NADH + 5 H(+)(in) = a quinol + NAD(+) + 4 H(+)(out). Its function is as follows. NDH-1 shuttles electrons from NADH, via FMN and iron-sulfur (Fe-S) centers, to quinones in the respiratory chain. The immediate electron acceptor for the enzyme in this species is believed to be ubiquinone. Couples the redox reaction to proton translocation (for every two electrons transferred, four hydrogen ions are translocated across the cytoplasmic membrane), and thus conserves the redox energy in a proton gradient. In Shewanella woodyi (strain ATCC 51908 / MS32), this protein is NADH-quinone oxidoreductase subunit C/D.